Reading from the N-terminus, the 174-residue chain is Peptide deformylase (174 aa).

Fe cation-binding residues include C96 and H138. The active site involves E139. H142 is a Fe cation binding site.

Belongs to the polypeptide deformylase family. Fe(2+) serves as cofactor.

It carries out the reaction N-terminal N-formyl-L-methionyl-[peptide] + H2O = N-terminal L-methionyl-[peptide] + formate. Removes the formyl group from the N-terminal Met of newly synthesized proteins. Requires at least a dipeptide for an efficient rate of reaction. N-terminal L-methionine is a prerequisite for activity but the enzyme has broad specificity at other positions. This Nautilia profundicola (strain ATCC BAA-1463 / DSM 18972 / AmH) protein is Peptide deformylase.